Reading from the N-terminus, the 161-residue chain is Endoribonuclease YbeY (161 aa).

Positions 121, 125, and 131 each coordinate Zn(2+).

The protein belongs to the endoribonuclease YbeY family. The cofactor is Zn(2+).

It is found in the cytoplasm. Single strand-specific metallo-endoribonuclease involved in late-stage 70S ribosome quality control and in maturation of the 3' terminus of the 16S rRNA. In Xanthomonas euvesicatoria pv. vesicatoria (strain 85-10) (Xanthomonas campestris pv. vesicatoria), this protein is Endoribonuclease YbeY.